The primary structure comprises 292 residues: 2-(5''-triphosphoribosyl)-3'-dephosphocoenzyme-A synthase (292 aa).

Belongs to the CitG/MdcB family.

It catalyses the reaction 3'-dephospho-CoA + ATP = 2'-(5''-triphospho-alpha-D-ribosyl)-3'-dephospho-CoA + adenine. Its function is as follows. Catalyzes the formation of 2-(5''-triphosphoribosyl)-3'-dephosphocoenzyme-A, the precursor of the prosthetic group of the holo-acyl carrier protein (gamma chain) of citrate lyase, from ATP and dephospho-CoA. The chain is 2-(5''-triphosphoribosyl)-3'-dephosphocoenzyme-A synthase from Escherichia coli O139:H28 (strain E24377A / ETEC).